The following is a 401-amino-acid chain: Formate dehydrogenase (401 aa).

Residues isoleucine 123 and asparagine 147 each coordinate substrate. NAD(+)-binding positions include serine 148, 202–203 (RI), aspartate 222, 257–261 (PLHPE), threonine 283, aspartate 309, 333–336 (HISG), and serine 381.

The protein belongs to the D-isomer specific 2-hydroxyacid dehydrogenase family. FDH subfamily. Homodimer.

It is found in the cytoplasm. The enzyme catalyses formate + NAD(+) = CO2 + NADH. In terms of biological role, catalyzes the NAD(+)-dependent oxidation of formate to carbon dioxide. Formate oxidation is the final step in the methanol oxidation pathway in methylotrophic microorganisms. Has a role in the detoxification of exogenous formate in non-methylotrophic organisms. The polypeptide is Formate dehydrogenase (Pseudomonas sp. (strain 101) (Achromobacter parvulus T1)).